The following is a 1872-amino-acid chain: MEDSDLSITNIRDFLTELPKLAKCEYSETTSYLLWKTLNLRLKHSDNDINWRSLVSILNSEAWENEKYRDILNGRKWRTLEFENDHHSVGNMHIGTACTRLCFPSETIYYCFTCSTNPLYEICELCFDKEKHVNHSYVAKVVMRPEGRICHCGDPFAFNDPSDAFKCKNELNNIPISNDNSNVTDDENVISLLNYVLDFLIDVTVSYKEEAEAHSSERKASSLMHPNQNSITDDIMEKHECEPLVNDENFVFFDNNWSNTRKEAHMEWAIQIEEEECNVHYMDLASTITRILNTPVEYAISITKALEDSHDVVTVLQSENFFEIDQIAKEFQKENIVVHVRKADDIFKRKLTDDLTDWLYSLCFKAATSLQNKYALRISMLDVWYSHFSKMRVSPTNTNPDFSKINLLGGFLISNEDSDESWFKPWSLENIEDERISKILTNYNERLIRAHSPNTVSHFYNFYGSRFQYIIINSINILSKKSKFKMLKIMASLFSLRDESRKFLAAQYIDVYLSVLYDAVASDAKECQVTLMSILGQYTFQDPSIANMTISSGFIERTIRFAFTLMAFNPEDLMSYLPISLYNGFKLPTETIRNRRTIICFKDLCTIMSANTVPEELLSNEAIFNAIIESFSEFSNVLPLKRETKEHVEVENFDFSAFYFFFSSILIMTDGYTRSISLVKDAAFRKQIVLKLLDVAQTREFESLTNSRKAISPDNASTNENDSNKATLSTVRETICNYVAETINFQVGVNTQYFFNPMSYLFKFVIQWSQCGRYEPIPASLTNYINLFEVFQDKQKALYISESALSTLVLIGQINVGFWVRNGTPITHQARMYTKYSMREFTYISDIFNVQFSMAMCNPDELMVTYLSRWGLKHWANGVPMYDYPDTETTVAVVNECILLLIQLLTEVRSLVMKSSKEGFERTFKSEIIHALCFDTCSYAQIVNCIPEHITKHPSFDIYLEKYANYTSPVSLTDNGIFVLKEKYKDEIDPYYIGLSSSRRYDVEKNIRLNMANLKKMKYEDTFVPAKKVKDLLKNTLFSGLYSISSVNTFGLFLKNTLDHIIKYDYDNLLPRVVHLIHLCVVNNLNEFMGILWHEYAIVDTEFCHYHSIGSILYYCLLKDNFSESHGKIREIFRYLMETAPHVNVNSYLREQTTSYTPGILWPTKEDKSHKDKEFERKKHLARLRKKKLMKKLAQQQMKFMENNSVDTSDISTPRTTSPSLSPTRINAENSSNTINSCCDDDCVFCKMPKDDDVFVYFSYQERNICDHGIDFTNPTDVNRINSLFSGKQTKDSAIQENPQDDDGTRLKFTSCEPVLRACGHGSHTKCLSGHMKSIRGIQNQTTKNIPLSYGSGLIYCPVCNSLSNSFLPKTNDIDKRTSSQFFMCIEKRSEAEENLDPMSSICIKAAMILGDLQGKKVTTIEDAYKVVNSVFINTISNTELRLRSHKKEGKIVNMERISSQCILTLHLVCELKSFIYKKFVNSKTFSSEISRKIWNWNEFLIKGNNVNLLLYMSQNFDNIDGGKTPQPPNLCIYEMFKRRFHQLLLLLARDMMRVNFYKDCRNKIKISSNGSEEPSTSFSYLFNTFKKYVDLFKPDDVRFDFTSLEKIKDFICSLLLESLSIFCRRTFLLFNIQYDDDGDGDNNNNRSNNFMDVKQREIELIFRYFKLPNLTHFLKDFFYNELTQNIERYNDGNDNLRIQQVIYDMVQNINTRAYPSPEHIQLIELPLNLSKFSLDNDEISNKCDKYEIAVCLLCGQKCHIQKSIALQGYLQGECTDHMRNGCEITSAYGVFLMTGTNAIYLSYGKRGTFYAAPYLSKYGETNEDYKFGTPVYLNRARYANLANEIVFGNMIPHIVFRLTDGSADLGGWETM.

The segment at 96–172 adopts a UBR-type zinc-finger fold; that stretch reads TACTRLCFPS…DAFKCKNELN (77 aa). K709 participates in a covalent cross-link: Glycyl lysine isopeptide (Lys-Gly) (interchain with G-Cter in ubiquitin). An interaction with UBC2 region spans residues 1134–1240; that stretch reads RYLMETAPHV…SSNTINSCCD (107 aa). Residues 1203-1227 are disordered; it reads NNSVDTSDISTPRTTSPSLSPTRIN. The span at 1212-1225 shows a compositional bias: low complexity; that stretch reads STPRTTSPSLSPTR. Phosphoserine occurs at positions 1218 and 1222. The RING-type; atypical zinc finger occupies 1241 to 1362; sequence DDCVFCKMPK…GLIYCPVCNS (122 aa).

Belongs to the E3 ubiquitin-protein ligase UBR1-like family. Interacts with MUB1, RPN4 and UBC2.

It localises to the cytoplasm. It catalyses the reaction S-ubiquitinyl-[E2 ubiquitin-conjugating enzyme]-L-cysteine + [acceptor protein]-L-lysine = [E2 ubiquitin-conjugating enzyme]-L-cysteine + N(6)-ubiquitinyl-[acceptor protein]-L-lysine.. It functions in the pathway protein modification; protein ubiquitination. E3 ubiquitin-protein ligase which probably functions outside the N-end rule pathway, since it lacks the residues essential for the degradation of N-end rule substrates. Mediates RPN4 ubiquitination and subsequent degradation. The polypeptide is E3 ubiquitin-protein ligase UBR2 (UBR2) (Saccharomyces cerevisiae (strain ATCC 204508 / S288c) (Baker's yeast)).